The chain runs to 35 residues: Photosystem II reaction center protein T (35 aa).

Residues 3–23 (ALVYTFLLVSTLGIIFFAIFF) form a helical membrane-spanning segment.

This sequence belongs to the PsbT family. PSII is composed of 1 copy each of membrane proteins PsbA, PsbB, PsbC, PsbD, PsbE, PsbF, PsbH, PsbI, PsbJ, PsbK, PsbL, PsbM, PsbT, PsbY, PsbZ, Psb30/Ycf12, at least 3 peripheral proteins of the oxygen-evolving complex and a large number of cofactors. It forms dimeric complexes.

It localises to the plastid. The protein resides in the chloroplast thylakoid membrane. Its function is as follows. Found at the monomer-monomer interface of the photosystem II (PS II) dimer, plays a role in assembly and dimerization of PSII. PSII is a light-driven water plastoquinone oxidoreductase, using light energy to abstract electrons from H(2)O, generating a proton gradient subsequently used for ATP formation. The sequence is that of Photosystem II reaction center protein T from Cedrus deodara (Deodar cedar).